Consider the following 399-residue polypeptide: MAREKFERNKPHVNIGTIGHVDHGKTTLTAAITNVLAKKGQAQAQDYGDIDGAPEERERGITINTAHVEYETEGRHYAHVDCPGHADYVKNMITGAAQMDGAILVCAATDGPMAQTKEHILLAKQVGVPALVVALNKCDMVDDEEIIELVEMEIRELLDSYDFPGDDIPIVQVSGLKALEGDSNWESKIEELMKAVDASIPEPEREIDKPFLMAIEDVFSITGRGTVATGRIERGKVKVGEEVEIVGIRDTRLTTVTGVEMFRKLLDEGMAGDNVGLLLRGVQKEDIERGMVLVKKGSITPHTKFEGEVYVLKKEEGGRHTPFFAGYRPQFYIRTTDVTGQITAFTSDDGANVEMVMPGDRIKMTGELICPVAIEQGMRFAIREGGRTIGAGVVSKIIE.

Positions 10–204 (KPHVNIGTIG…AVDASIPEPE (195 aa)) constitute a tr-type G domain. Residues 19–26 (GHVDHGKT) are G1. Residue 19–26 (GHVDHGKT) coordinates GTP. Thr26 is a Mg(2+) binding site. Residues 60-64 (GITIN) are G2. The tract at residues 81-84 (DCPG) is G3. Residues 81-85 (DCPGH) and 136-139 (NKCD) contribute to the GTP site. The tract at residues 136–139 (NKCD) is G4. The tract at residues 174–176 (SGL) is G5.

It belongs to the TRAFAC class translation factor GTPase superfamily. Classic translation factor GTPase family. EF-Tu/EF-1A subfamily. Monomer.

The protein resides in the cytoplasm. It carries out the reaction GTP + H2O = GDP + phosphate + H(+). Functionally, GTP hydrolase that promotes the GTP-dependent binding of aminoacyl-tRNA to the A-site of ribosomes during protein biosynthesis. This chain is Elongation factor Tu, found in Prochlorococcus marinus (strain MIT 9515).